The sequence spans 285 residues: ATP synthase gamma chain (285 aa).

It belongs to the ATPase gamma chain family. In terms of assembly, F-type ATPases have 2 components, CF(1) - the catalytic core - and CF(0) - the membrane proton channel. CF(1) has five subunits: alpha(3), beta(3), gamma(1), delta(1), epsilon(1). CF(0) has three main subunits: a, b and c.

Its subcellular location is the cell membrane. Produces ATP from ADP in the presence of a proton gradient across the membrane. The gamma chain is believed to be important in regulating ATPase activity and the flow of protons through the CF(0) complex. This Halalkalibacterium halodurans (strain ATCC BAA-125 / DSM 18197 / FERM 7344 / JCM 9153 / C-125) (Bacillus halodurans) protein is ATP synthase gamma chain.